Reading from the N-terminus, the 133-residue chain is ATP synthase epsilon chain, chloroplastic (133 aa).

It belongs to the ATPase epsilon chain family. F-type ATPases have 2 components, CF(1) - the catalytic core - and CF(0) - the membrane proton channel. CF(1) has five subunits: alpha(3), beta(3), gamma(1), delta(1), epsilon(1). CF(0) has three main subunits: a, b and c.

It localises to the plastid. It is found in the chloroplast thylakoid membrane. In terms of biological role, produces ATP from ADP in the presence of a proton gradient across the membrane. This chain is ATP synthase epsilon chain, chloroplastic, found in Lactuca sativa (Garden lettuce).